We begin with the raw amino-acid sequence, 499 residues long: Alpha-amylase A type-3 (499 aa).

The first 21 residues, 1 to 21, serve as a signal peptide directing secretion; the sequence is MMVAWWSLFLYGLQVAAPALA. Cys51 and Cys59 are oxidised to a cystine. Trp104 contributes to the substrate binding site. Ca(2+) is bound at residue Asn142. His143 serves as a coordination point for substrate. A disulfide bond links Cys171 and Cys185. Positions 183 and 196 each coordinate Ca(2+). Asn218 carries N-linked (GlcNAc...) asparagine glycosylation. A substrate-binding site is contributed by Arg225. Residues Asp227, His231, and Glu251 each contribute to the Ca(2+) site. Catalysis depends on Asp227, which acts as the Nucleophile. 230-231 lines the substrate pocket; that stretch reads KH. Glu251 functions as the Proton donor in the catalytic mechanism. Substrate is bound at residue Gly255. Cys261 and Cys304 are joined by a disulfide. Substrate is bound at residue Arg365. Cys461 and Cys496 are disulfide-bonded.

Belongs to the glycosyl hydrolase 13 family. Monomer. It depends on Ca(2+) as a cofactor.

It is found in the secreted. It carries out the reaction Endohydrolysis of (1-&gt;4)-alpha-D-glucosidic linkages in polysaccharides containing three or more (1-&gt;4)-alpha-linked D-glucose units.. The chain is Alpha-amylase A type-3 (amy3) from Aspergillus oryzae (strain ATCC 42149 / RIB 40) (Yellow koji mold).